A 500-amino-acid polypeptide reads, in one-letter code: L-arabinose isomerase (500 aa).

The Mn(2+) site is built by Glu-306, Glu-333, His-349, and His-448.

Belongs to the arabinose isomerase family. The cofactor is Mn(2+).

It catalyses the reaction beta-L-arabinopyranose = L-ribulose. Its pathway is carbohydrate degradation; L-arabinose degradation via L-ribulose; D-xylulose 5-phosphate from L-arabinose (bacterial route): step 1/3. In terms of biological role, catalyzes the conversion of L-arabinose to L-ribulose. This is L-arabinose isomerase from Shewanella sp. (strain MR-7).